A 345-amino-acid chain; its full sequence is Protein RecA (345 aa).

66–73 is a binding site for ATP; it reads GPESSGKT.

The protein belongs to the RecA family.

It localises to the cytoplasm. Its function is as follows. Can catalyze the hydrolysis of ATP in the presence of single-stranded DNA, the ATP-dependent uptake of single-stranded DNA by duplex DNA, and the ATP-dependent hybridization of homologous single-stranded DNAs. It interacts with LexA causing its activation and leading to its autocatalytic cleavage. The protein is Protein RecA of Helicobacter hepaticus (strain ATCC 51449 / 3B1).